We begin with the raw amino-acid sequence, 232 residues long: Lipopolysaccharide core heptose(II) kinase WaaY (232 aa).

This sequence belongs to the protein kinase superfamily. RfaY/WaaY family.

The catalysed reaction is alpha-D-Glc-(1-&gt;3)-[L-alpha-D-Hep-(1-&gt;7)]-L-alpha-D-Hep-(1-&gt;3)-4-O-PO3(2-)-L-alpha-D-Hep-(1-&gt;5)-[alpha-Kdo-(2-&gt;4)]-alpha-Kdo-(2-&gt;6)-lipid A + ATP = alpha-D-Glc-(1-&gt;3)-[L-alpha-D-Hep-(1-&gt;7)]-4-O-PO3(2-)-L-alpha-D-Hep-(1-&gt;3)-4-O-PO3(2-)-L-alpha-D-Hep-(1-&gt;5)-[alpha-Kdo-(2-&gt;4)]-alpha-Kdo-(2-&gt;6)-lipid A + ADP + H(+). It functions in the pathway bacterial outer membrane biogenesis; LPS core biosynthesis. In terms of biological role, kinase involved in the biosynthesis of the core oligosaccharide region of lipopolysaccharide (LPS). Catalyzes the phosphorylation of the second heptose unit (HepII) of the inner core. The polypeptide is Lipopolysaccharide core heptose(II) kinase WaaY (Escherichia coli (strain K12)).